The sequence spans 37 residues: Small ribosomal subunit protein uS19 (37 aa).

The protein belongs to the universal ribosomal protein uS19 family.

The protein is Small ribosomal subunit protein uS19 (RPS15) of Helix lucorum (Snail).